We begin with the raw amino-acid sequence, 204 residues long: MLSLQFITHQTENYSYLESARMALEGGCKWIQLRMKEASPEEVEAVALQLKPLCKAKEAILILDDHVELAKKLEVDGVHLGKKDMPIGEARQMLGEAFIIGGTANTFEDVKLHHAAGADYLGIGPFRFTTTKKNLSPVLGLEGYTSILAQMNEAGIRIPVVAIGGIVAEDIPAIMETGVNGIALSGAILQAPDPVEETKRILNI.

4-amino-2-methyl-5-(diphosphooxymethyl)pyrimidine-binding positions include 32–36 (QLRMK) and aspartate 64. Positions 65 and 84 each coordinate Mg(2+). Threonine 103 is a 4-amino-2-methyl-5-(diphosphooxymethyl)pyrimidine binding site. Residue 129–131 (TTT) coordinates 2-[(2R,5Z)-2-carboxy-4-methylthiazol-5(2H)-ylidene]ethyl phosphate. 4-amino-2-methyl-5-(diphosphooxymethyl)pyrimidine is bound at residue lysine 132. Glycine 165 provides a ligand contact to 2-[(2R,5Z)-2-carboxy-4-methylthiazol-5(2H)-ylidene]ethyl phosphate.

The protein belongs to the thiamine-phosphate synthase family. It depends on Mg(2+) as a cofactor.

The catalysed reaction is 2-[(2R,5Z)-2-carboxy-4-methylthiazol-5(2H)-ylidene]ethyl phosphate + 4-amino-2-methyl-5-(diphosphooxymethyl)pyrimidine + 2 H(+) = thiamine phosphate + CO2 + diphosphate. It carries out the reaction 2-(2-carboxy-4-methylthiazol-5-yl)ethyl phosphate + 4-amino-2-methyl-5-(diphosphooxymethyl)pyrimidine + 2 H(+) = thiamine phosphate + CO2 + diphosphate. The enzyme catalyses 4-methyl-5-(2-phosphooxyethyl)-thiazole + 4-amino-2-methyl-5-(diphosphooxymethyl)pyrimidine + H(+) = thiamine phosphate + diphosphate. Its pathway is cofactor biosynthesis; thiamine diphosphate biosynthesis; thiamine phosphate from 4-amino-2-methyl-5-diphosphomethylpyrimidine and 4-methyl-5-(2-phosphoethyl)-thiazole: step 1/1. In terms of biological role, condenses 4-methyl-5-(beta-hydroxyethyl)thiazole monophosphate (THZ-P) and 2-methyl-4-amino-5-hydroxymethyl pyrimidine pyrophosphate (HMP-PP) to form thiamine monophosphate (TMP). In Bacteroides fragilis (strain ATCC 25285 / DSM 2151 / CCUG 4856 / JCM 11019 / LMG 10263 / NCTC 9343 / Onslow / VPI 2553 / EN-2), this protein is Thiamine-phosphate synthase.